Here is a 444-residue protein sequence, read N- to C-terminus: Baeyer-Villiger oxidase ptaJ (444 aa).

The protein belongs to the questin oxidase family. Requires NADPH as cofactor.

Its pathway is secondary metabolite biosynthesis. Its function is as follows. Baeyer-Villiger oxidase; part of the gene cluster that mediates the biosynthesis of pestheic acid, a diphenyl ether which is a biosynthetic precursor of the unique chloropupukeananes. The biosynthesis initiates from condensation of acetate and malonate units catalyzed by the non-reducing PKS ptaA. As the ptaA protein is TE/CLC domain-deficient, hydrolysis and Claisen cyclization of the polyketide could be catalyzed by ptaB containing a beta-lactamase domain. The ptaB protein might hydrolyze the thioester bond between the ACP of ptaA and the intermediate to release atrochrysone carboxylic acid, which is spontaneously dehydrated to form endocrocin anthrone. Endocrocin anthrone is then converted to endocrocin, catalyzed by the anthrone oxygenase ptaC. Spontaneous decarboxylation of endocrocin occurs to generate emodin. An O-methyltransferase (ptaH or ptaI) could methylate emodin to form physcion. PtaJ could then catalyze the oxidative cleavage of physcion, and rotation of the intermediate could then afford desmethylisosulochrin. PtaF, a putative NADH-dependent oxidoreductase, might also participate in the oxidative cleavage step. Desmethylisosulochrin is then transformed by another O-methyltransferase (ptaH or ptaI) to form isosulochrin. Chlorination of isosulochrin by ptaM in the cyclohexadienone B ring then produces chloroisosulochrin. PtaE is responsible for the oxidative coupling reactions of both benzophenones isosulouchrin and chloroisosulouchrin to RES-1214-1 and pestheic acid respectively, regardless of chlorination. This Pestalotiopsis fici (strain W106-1 / CGMCC3.15140) protein is Baeyer-Villiger oxidase ptaJ.